A 61-amino-acid chain; its full sequence is Mu-diguetoxin-Dc1c (61 aa).

3 disulfides stabilise this stretch: Cys-12/Cys-25, Cys-19/Cys-39, and Cys-24/Cys-53.

The protein belongs to the neurotoxin 26 (DTX) family. In terms of tissue distribution, expressed by the venom gland.

Its subcellular location is the secreted. Functionally, acts by delaying the inactivation of presynaptic voltage-sensitive sodium channels (Nav). Acts against insects and causes a progressive spastic paralysis. This chain is Mu-diguetoxin-Dc1c, found in Diguetia canities (Desert bush spider).